The chain runs to 882 residues: Bifunctional heparan sulfate N-deacetylase/N-sulfotransferase 1 (882 aa).

Over 1–17 the chain is Cytoplasmic; the sequence is MPALACLRRLCRHLSPQ. Residues 1–169 form a sufficient for localization to Golgi membrane region; that stretch reads MPALACLRRL…VAYGVGIIGF (169 aa). Residues 18 to 38 form a helical; Signal-anchor for type II membrane protein membrane-spanning segment; sequence AVLFLLFVFCLFSVFVSAYYL. Residues 39-882 are Lumenal-facing; that stretch reads YGWNRGLEPS…WLREDLQNTR (844 aa). Residues 40-598 are heparan sulfate N-deacetylase 1; it reads GWNRGLEPSA…KRHKDIWSKE (559 aa). Residues Asn231, Asn351, and Asn401 are each glycosylated (N-linked (GlcNAc...) asparagine). Residues 599–882 are heparan sulfate N-sulfotransferase 1; the sequence is KTCDRFPKLL…WLREDLQNTR (284 aa). Catalysis depends on Lys614, which acts as the For sulfotransferase activity. An adenosine 3',5'-bisphosphate-binding site is contributed by 614-618; sequence KTGTT. Residue Asn667 is glycosylated (N-linked (GlcNAc...) asparagine). The adenosine 3',5'-bisphosphate site is built by Ser712 and Trp817. Cys818 and Cys828 form a disulfide bridge. 833-837 is an adenosine 3',5'-bisphosphate binding site; the sequence is KGRKY.

The protein belongs to the sulfotransferase 1 family. NDST subfamily. As to quaternary structure, monomer. Interacts with heparan sulfate co-polymerase subunits EXT1 and EXT2. In terms of tissue distribution, widely expressed in adult and throughout development.

Its subcellular location is the golgi apparatus membrane. It is found in the golgi apparatus. The protein resides in the trans-Golgi network membrane. The protein localises to the cis-Golgi network membrane. The enzyme catalyses N-acetyl-alpha-D-glucosaminyl-[heparan sulfate](n) + H2O = alpha-D-glucosaminyl-[heparan sulfate](n) + acetate. The catalysed reaction is alpha-D-glucosaminyl-[heparan sulfate](n) + 3'-phosphoadenylyl sulfate = N-sulfo-alpha-D-glucosaminyl-[heparan sulfate](n) + adenosine 3',5'-bisphosphate + 2 H(+). Its pathway is glycan metabolism; heparan sulfate biosynthesis. It functions in the pathway glycan metabolism; heparin biosynthesis. Inhibited by long N-sulfated sequences (more than 6 sugar residues) accumulating in its substrates heparan sulfate, and heparin. Its function is as follows. Essential bifunctional enzyme that catalyzes both the N-deacetylation and the N-sulfation of glucosamine (GlcNAc) of the glycosaminoglycan in heparan sulfate. Modifies the GlcNAc-GlcA disaccharide repeating sugar backbone to make N-sulfated heparosan, a prerequisite substrate for later modifications in heparin biosynthesis. Plays a role in determining the extent and pattern of sulfation of heparan sulfate. Participates in biosynthesis of heparan sulfate that can ultimately serve as L-selectin ligands, thereby playing a role in inflammatory response. Required for the exosomal release of SDCBP, CD63 and syndecan. The chain is Bifunctional heparan sulfate N-deacetylase/N-sulfotransferase 1 from Mus musculus (Mouse).